Reading from the N-terminus, the 299-residue chain is B-box zinc finger protein 22 (299 aa).

Positions 5, 8, 28, 33, 57, 60, 80, and 85 each coordinate Zn(2+). The B box-type 1; atypical zinc finger occupies 5–47 (CNVCEAAEATVLCCADEAALCWACDEKIHAANKLAGKHQRVPL). The B box-type 2; atypical zinc finger occupies 57 to 99 (CDICQEASGFFFCLQDRALLCRKCDVAIHTVNPHVSAHQRFLL). Disordered regions lie at residues 143–181 (FDHHHHQQQQEQQEGVIPGTKVNDQTSTKLPLVSSGSTT) and 206–299 (ENNG…RRRF). Composition is skewed to polar residues over residues 164-181 (VNDQTSTKLPLVSSGSTT), 251-260 (QIQSPPTASG), and 277-290 (ITSSTPYTGSSPNQ).

Interacts with HY5. Post-translationally, ubiquitinated by COP1 in vitro. COP1-mediated degradation of BBX22 by the proteasome occurs in the dark and is important for a precise skotomorphogenesis process and optimization of seedling growth under short days conditions.

It localises to the nucleus. Its function is as follows. Acts as a positive regulator of seedling photomorphogenesis and light-regulated inhibition of hypocotyl elongation, independently and in concert with HY5 and BBX21. Acts as a positive regulator of de-etiolation and influences chloroplast biogenesis and function through regulation of genes encoding chloroplast proteins. Acts downstream of COP1 and plays an important role in early and long-term adjustment of the shade avoidance syndrome (SAS) responses in natural environments. Regulates the expression of genes responsive to light hormone signals which may contribute to optimal seedling development. The protein is B-box zinc finger protein 22 of Arabidopsis thaliana (Mouse-ear cress).